A 240-amino-acid chain; its full sequence is Endonuclease NucS 1 (240 aa).

This sequence belongs to the NucS endonuclease family.

The protein localises to the cytoplasm. In terms of biological role, cleaves both 3' and 5' ssDNA extremities of branched DNA structures. This is Endonuclease NucS 1 from Halobacterium salinarum (strain ATCC 700922 / JCM 11081 / NRC-1) (Halobacterium halobium).